The following is a 465-amino-acid chain: FAD-dependent monooxygenase penM (465 aa).

A helical transmembrane segment spans residues 5-25; the sequence is QFHVIIVGGSIAGLTLAHCLH. FAD is bound by residues Glu35, Gly49, Arg108, Asp299, and Ala312. A helical membrane pass occupies residues 435–455; that stretch reads VLVLLLSALTWSCLGNMNIIM.

Belongs to the paxM FAD-dependent monooxygenase family. The cofactor is FAD.

The protein resides in the membrane. Its pathway is secondary metabolite biosynthesis. Its function is as follows. FAD-dependent monooxygenase; part of the gene cluster that mediates the biosynthesis of the indole diterpenes penitrems. The geranylgeranyl diphosphate (GGPP) synthase penG catalyzes the first step in penitrem biosynthesis via conversion of farnesyl pyrophosphate and isopentyl pyrophosphate into geranylgeranyl pyrophosphate (GGPP). Condensation of indole-3-glycerol phosphate with GGPP by the prenyl transferase penC then forms 3-geranylgeranylindole (3-GGI). Epoxidation by the FAD-dependent monooxygenase penM leads to a epoxidized-GGI that is substrate of the terpene cyclase penB for cyclization to yield paspaline. Paspaline is subsequently converted to 13-desoxypaxilline by the cytochrome P450 monooxygenase penP, the latter being then converted to paxilline by the cytochrome P450 monooxygenase penQ. Paxilline is converted to beta-paxitriol via C-10 ketoreduction by the short-chain dehydrogenase PC-15 which can be monoprenylated at the C-20 by the indole diterpene prenyltransferase penD. A two-step elimination (acetylation and elimination) process performed by the O-acetyltransferase PC-16 and the P.simplicissimum ptmI-ortholog not yet identified in P.crustosum, leads to the production of the prenylated form of penijanthine. The FAD-linked oxidoreductase ptmO then converts the prenylated form of penijanthine into PC-M5 which is in turn transformed into PC-M4 by the aromatic dimethylallyltransferase PC-22. A series of oxidation steps involving 4 cytochrome P450 monooxygenases (PC-21, PC-05, PC-23, PC-20) and a FAD-dependent monooxygenase (PC-14) are required for the transformation of PC-M4 to penitrems A and E. Synthesis of these final products is proposed to proceed via penitrems D and C (PC-21, PC-05, PC-14) and penitrems B and F (PC-21, PC-05, PC-14, PC-23). In Penicillium crustosum (Blue mold fungus), this protein is FAD-dependent monooxygenase penM.